Here is a 75-residue protein sequence, read N- to C-terminus: ATP synthase subunit c (75 aa).

2 helical membrane passes run 8–28 and 52–72; these read FIAI…IANI and IGAA…MLLI.

It belongs to the ATPase C chain family. F-type ATPases have 2 components, F(1) - the catalytic core - and F(0) - the membrane proton channel. F(1) has five subunits: alpha(3), beta(3), gamma(1), delta(1), epsilon(1). F(0) has three main subunits: a(1), b(2) and c(10-14). The alpha and beta chains form an alternating ring which encloses part of the gamma chain. F(1) is attached to F(0) by a central stalk formed by the gamma and epsilon chains, while a peripheral stalk is formed by the delta and b chains.

It is found in the cell membrane. Its function is as follows. F(1)F(0) ATP synthase produces ATP from ADP in the presence of a proton or sodium gradient. F-type ATPases consist of two structural domains, F(1) containing the extramembraneous catalytic core and F(0) containing the membrane proton channel, linked together by a central stalk and a peripheral stalk. During catalysis, ATP synthesis in the catalytic domain of F(1) is coupled via a rotary mechanism of the central stalk subunits to proton translocation. Key component of the F(0) channel; it plays a direct role in translocation across the membrane. A homomeric c-ring of between 10-14 subunits forms the central stalk rotor element with the F(1) delta and epsilon subunits. In Wolbachia pipientis wMel, this protein is ATP synthase subunit c.